Reading from the N-terminus, the 290-residue chain is 4-hydroxy-tetrahydrodipicolinate synthase (290 aa).

A pyruvate-binding site is contributed by T44. The Proton donor/acceptor role is filled by Y132. The active-site Schiff-base intermediate with substrate is the K160. I202 provides a ligand contact to pyruvate.

The protein belongs to the DapA family. Homotetramer; dimer of dimers.

It localises to the cytoplasm. It carries out the reaction L-aspartate 4-semialdehyde + pyruvate = (2S,4S)-4-hydroxy-2,3,4,5-tetrahydrodipicolinate + H2O + H(+). The protein operates within amino-acid biosynthesis; L-lysine biosynthesis via DAP pathway; (S)-tetrahydrodipicolinate from L-aspartate: step 3/4. Its function is as follows. Catalyzes the condensation of (S)-aspartate-beta-semialdehyde [(S)-ASA] and pyruvate to 4-hydroxy-tetrahydrodipicolinate (HTPA). The protein is 4-hydroxy-tetrahydrodipicolinate synthase of Ruegeria pomeroyi (strain ATCC 700808 / DSM 15171 / DSS-3) (Silicibacter pomeroyi).